A 439-amino-acid polypeptide reads, in one-letter code: Microfibrillar-associated protein 1 (439 aa).

Over residues 1-17 the composition is skewed to polar residues; sequence MSVPSSLMKQPPIQSTA. A disordered region spans residues 1–200; it reads MSVPSSLMKQ…SEDEMEPRLK (200 aa). S2 carries the N-acetylserine modification. Residues 23–34 are compositionally biased toward basic and acidic residues; sequence RNEKGEISMEKV. S52 and S53 each carry phosphoserine. Residues 61–70 are compositionally biased toward basic and acidic residues; the sequence is QFIKKAKEQE. A Glycyl lysine isopeptide (Lys-Gly) (interchain with G-Cter in SUMO2) cross-link involves residue K67. Residues 71–81 show a composition bias toward acidic residues; sequence AEPEEQEEDSS. Phosphoserine is present on residues S94, S116, S118, S132, and S133. Acidic residues-rich tracts occupy residues 112–122 and 131–144; these read VVGESDSEVEG and DSSE…DEEE. A compositionally biased stretch (basic and acidic residues) spans 145-163; sequence IERRRGMMRQRAQERKNEE. Positions 178 to 195 are enriched in acidic residues; sequence ESESESEYEEYTDSEDEM. Residue K249 forms a Glycyl lysine isopeptide (Lys-Gly) (interchain with G-Cter in SUMO2) linkage. T267 bears the Phosphothreonine mark. K357 participates in a covalent cross-link: Glycyl lysine isopeptide (Lys-Gly) (interchain with G-Cter in SUMO2). S361 bears the Phosphoserine mark. Residues K371, K381, K415, and K418 each participate in a glycyl lysine isopeptide (Lys-Gly) (interchain with G-Cter in SUMO2) cross-link. A Phosphoserine modification is found at S432.

It belongs to the MFAP1 family. As to quaternary structure, component of the spliceosome B complex. Interacts with PRPF38A (via N-terminal interaction domain).

The protein resides in the nucleus. Functionally, involved in pre-mRNA splicing as a component of the spliceosome. This chain is Microfibrillar-associated protein 1, found in Bos taurus (Bovine).